The primary structure comprises 485 residues: Subtilisin-like protease 1 (485 aa).

The first 19 residues, 1–19 (MGIFRFISISLAAVSAANA), serve as a signal peptide directing secretion. Residues 20-116 (GHILSMGHAK…VEPDTTITIH (97 aa)) constitute a propeptide that is removed on maturation. The Inhibitor I9 domain maps to 34–116 (SYIVVMKDGT…VEPDTTITIH (83 aa)). The Peptidase S8 domain occupies 126–400 (SWGLARISSQ…NILINNGDAK (275 aa)). Active-site charge relay system residues include Asp-158 and His-190. A glycan (N-linked (GlcNAc...) asparagine) is linked at Asn-251. The active-site Charge relay system is Ser-345. Residues 377-394 (GTSSVTNPGPGTRTNILI) show a composition bias toward polar residues. Residues 377–462 (GTSSVTNPGP…HTPFPNDDFN (86 aa)) form a disordered region. Residues 409–418 (PSQPPKPSQP) show a composition bias toward pro residues. The span at 419–428 (SKPQQPSEPQ) shows a compositional bias: low complexity. A compositionally biased stretch (pro residues) spans 433–455 (PQEPAPGQPAPAPAPVPQHPHTP).

Belongs to the peptidase S8 family.

The protein localises to the secreted. Secreted subtilisin-like serine protease with keratinolytic activity that contributes to pathogenicity. In Arthroderma otae (strain ATCC MYA-4605 / CBS 113480) (Microsporum canis), this protein is Subtilisin-like protease 1 (SUB1).